Reading from the N-terminus, the 223-residue chain is Protein-lysine N-methyltransferase CG9154 (223 aa).

It belongs to the class I-like SAM-binding methyltransferase superfamily. EFM5 family.

The protein resides in the cytoplasm. Its function is as follows. S-adenosyl-L-methionine-dependent protein-lysine N-methyltransferase that methylates elongation factor 1-alpha. The chain is Protein-lysine N-methyltransferase CG9154 from Drosophila melanogaster (Fruit fly).